The chain runs to 293 residues: MASITLTPSEKDIQAFLEHYQTSLAPSKNPYIRYFLKLPQATVSIYTSGKILLQGEGAEKYASFFGYQAVEQTSGQNLPLIGTDEVGNGSYFGGLAVVAAFVTPDQHDFLRKLGVGDSKTLTDQKIRQIAPILKEKIQHQALLLSPSKYNEVIGNRYNAVSVKVALHNQAIYLLLQKGVQPEKIVIDAFTSAKNYDKYLAQETNRFSNPISLEEKAEGKYLAVAVSSVIARDLFLENLENLGRELGYQLPSGAGTASDKVASQILQAYGMQGLNFCAKLHFKNTEKAKKRLER.

Residues 78-293 form the RNase H type-2 domain; sequence LPLIGTDEVG…TEKAKKRLER (216 aa). A divalent metal cation is bound by residues Asp84, Glu85, and Asp187.

This sequence belongs to the RNase HII family. RnhC subfamily. It depends on Mn(2+) as a cofactor. Mg(2+) serves as cofactor.

The protein resides in the cytoplasm. It catalyses the reaction Endonucleolytic cleavage to 5'-phosphomonoester.. Its function is as follows. Endonuclease that specifically degrades the RNA of RNA-DNA hybrids. This chain is Ribonuclease HIII, found in Streptococcus pneumoniae (strain Taiwan19F-14).